A 329-amino-acid chain; its full sequence is Vomeronasal type-1 receptor 43 (329 aa).

The Extracellular portion of the chain corresponds to 1-32 (MSKILFFSPCSLFSHTMNKNSRLHTNSNIGNT). A helical transmembrane segment spans residues 33 to 53 (FFSEIGIGITGNSFLLLYHIL). Residues 54-65 (KFIRGHRPRLTD) are Cytoplasmic-facing. Residues 66-86 (LPIGLLSLIHLLMLLVAAFIA) form a helical membrane-spanning segment. Residues 87-109 (TDIFISRRGWDDIICKFLVYLYR) lie on the Extracellular side of the membrane. Residues Cys-101 and Cys-188 are joined by a disulfide bond. The chain crosses the membrane as a helical span at residues 110 to 130 (VLRGLSLCTTSMLSVLQAIIL). Residues 131 to 147 (SPRSSCLSKFKHISLHH) lie on the Cytoplasmic side of the membrane. The helical transmembrane segment at 148–168 (ILCAILFLSVLYMLISSQLLV) threads the bilayer. The Extracellular segment spans residues 169 to 209 (SIIATPNLTTNDLTYVTQSCSILPLSYLVESINSTLLAIRE). N-linked (GlcNAc...) asparagine glycans are attached at residues Asn-175 and Asn-201. A helical transmembrane segment spans residues 210 to 230 (YFLISLMFLSTWYIVALLCMH). At 231–255 (RKQTQHLQETRLSLKKSPEQSATQT) the chain is on the cytoplasmic side. Residues 256-276 (ILMLMTFFVLMTIYDNIVSCL) form a helical membrane-spanning segment. The Extracellular segment spans residues 277 to 285 (RTMLLNDPT). The helical transmembrane segment at 286–306 (SYSIELFMIHIYATVSPFVFM) threads the bilayer. Topologically, residues 307-329 (SNEKHIVNFLRSMGKRMINLNLH) are cytoplasmic.

This sequence belongs to the G-protein coupled receptor 1 family.

It is found in the cell membrane. In terms of biological role, putative pheromone receptor implicated in the regulation of social and reproductive behavior. The sequence is that of Vomeronasal type-1 receptor 43 (Vmn1r43) from Mus musculus (Mouse).